The following is a 635-amino-acid chain: Cationic amino acid transporter 4 (635 aa).

A run of 3 helical transmembrane segments spans residues 42 to 62 (LTLL…TGTV), 66 to 86 (MAGP…LLAA), and 113 to 133 (IWAF…GAAV). N-linked (GlcNAc...) asparagine glycans are attached at residues N146, N151, and N195. The helical transmembrane segment at 197-217 (TFSAISLIVILFIIVLGFILA) threads the bilayer. N-linked (GlcNAc...) asparagine glycosylation occurs at N221. 5 helical membrane-spanning segments follow: residues 229 to 249 (FAPF…YAFV), 270 to 290 (MAIA…STVL), 318 to 338 (GFIV…SNLF), 365 to 385 (QVPV…ALLL), and 391 to 411 (VQFL…SIIV). Phosphoserine is present on residues S422 and S427. Transmembrane regions (helical) follow at residues 478–498 (VAWA…VLVF), 508–528 (WGYV…LLVL), 539–559 (TFQI…NTCL), and 567–587 (TWLR…GYGI).

The protein belongs to the amino acid-polyamine-organocation (APC) superfamily. Cationic amino acid transporter (CAT) (TC 2.A.3.3) family.

It is found in the membrane. Its function is as follows. Involved in the transport of the cationic amino acids (arginine, lysine and ornithine). This chain is Cationic amino acid transporter 4 (Slc7a4), found in Mus musculus (Mouse).